The chain runs to 467 residues: Dynactin subunit 4 (467 aa).

The residue at position 2 (A2) is an N-acetylalanine. The stretch at 152–172 (QQLAQKEKVERDRKKLARRRN) forms a coiled coil. S203 is modified (phosphoserine). Residue K222 forms a Glycyl lysine isopeptide (Lys-Gly) (interchain with G-Cter in SUMO2) linkage. At T414 the chain carries Phosphothreonine.

The protein belongs to the dynactin subunit 4 family. Subunit of dynactin, a multiprotein complex part of a tripartite complex with dynein and a adapter, such as BICDL1, BICD2 or HOOK3. The dynactin complex is built around ACTR1A/ACTB filament and consists of an actin-related filament composed of a shoulder domain, a pointed end and a barbed end. Its length is defined by its flexible shoulder domain. The soulder is composed of 2 DCTN1 subunits, 4 DCTN2 and 2 DCTN3. The 4 DCNT2 (via N-terminus) bind the ACTR1A filament and act as molecular rulers to determine the length. The pointed end is important for binding dynein-dynactin cargo adapters. Consists of 4 subunits: ACTR10, DCNT4, DCTN5 and DCTN6. The barbed end is composed of a CAPZA1:CAPZB heterodimers, which binds ACTR1A/ACTB filament and dynactin and stabilizes dynactin. Interacts with ATP7B, but not ATP7A, in a copper-dependent manner. Interacts with ANK2; this interaction is required for localization at costameres. Interacts with N4BP2L1.

The protein resides in the cytoplasm. The protein localises to the cytoskeleton. It localises to the microtubule organizing center. It is found in the centrosome. Its subcellular location is the stress fiber. The protein resides in the cell cortex. The protein localises to the myofibril. It localises to the sarcomere. Part of the dynactin complex that activates the molecular motor dynein for ultra-processive transport along microtubules. This is Dynactin subunit 4 (Dctn4) from Mus musculus (Mouse).